Here is a 350-residue protein sequence, read N- to C-terminus: MSNSWWLKPAQAIDVPMREAALARQQQLTKPAGSLAQLERLAVQLSGLQGRERPAADKLWIAIFAGDHGVVAEGVSAYPQEVTGQMLHNFVNGGAAISVLARQLSAQLDVVDLGTVSPMDLPGVRHLRIGAGTANFVDGPAMTVEQGLAALQAGRDSVLRAKAVGTELFIGGEMGIGNTAAASAVACSVLECAAPLLVGPGTGLNAEGIVHKTRVIERALALHAEHAGDPLQSLFCLGGFEIAALTGAYLACAQEGIVAMVDGFICSVAALVAVRLNPSCRDWLLFGHRGAEPGHRHLLETLQAEPLLDLGLRLGEGSGAALAVPLVRLACELHNGMATFAEAAVADRPA.

Glu-316 serves as the catalytic Proton acceptor.

The protein belongs to the CobT family.

It carries out the reaction 5,6-dimethylbenzimidazole + nicotinate beta-D-ribonucleotide = alpha-ribazole 5'-phosphate + nicotinate + H(+). It functions in the pathway nucleoside biosynthesis; alpha-ribazole biosynthesis; alpha-ribazole from 5,6-dimethylbenzimidazole: step 1/2. Its function is as follows. Catalyzes the synthesis of alpha-ribazole-5'-phosphate from nicotinate mononucleotide (NAMN) and 5,6-dimethylbenzimidazole (DMB). This Pseudomonas syringae pv. tomato (strain ATCC BAA-871 / DC3000) protein is Nicotinate-nucleotide--dimethylbenzimidazole phosphoribosyltransferase.